Reading from the N-terminus, the 80-residue chain is Small ribosomal subunit protein uS17 (80 aa).

The protein belongs to the universal ribosomal protein uS17 family. Part of the 30S ribosomal subunit.

Its function is as follows. One of the primary rRNA binding proteins, it binds specifically to the 5'-end of 16S ribosomal RNA. This is Small ribosomal subunit protein uS17 from Microcystis aeruginosa (strain NIES-843 / IAM M-2473).